A 1157-amino-acid chain; its full sequence is Cyclin-dependent kinase 12 (1157 aa).

Residues 15–540 (SDVSSEDFSD…RSPTSRDLKH (526 aa)) form a disordered region. Residues 18–32 (SSEDFSDQEAGDLDA) show a composition bias toward acidic residues. The span at 55–76 (GRLDAKPDKEGYDNYRSRRAED) shows a compositional bias: basic and acidic residues. Polar residues predominate over residues 85-94 (SRQTSSSEAT). T106 is subject to Phosphothreonine. Residues 134 to 162 (RQKRKKQKKEKHKHKSKKKSKKRKKKRAK) show a composition bias toward basic residues. Low complexity predominate over residues 163 to 176 (SYSSIDSMSDNDIN). A Phosphothreonine modification is found at T184. Positions 189–215 (PSKSNERTVSAAPSSFTPHNLKESSSP) are enriched in polar residues. S190 and S192 each carry phosphoserine. T217 is subject to Phosphothreonine. Polar residues predominate over residues 224 to 255 (PNTNSNYYGESSLETANSALGSNLQVTVTNKQ). Residues 256-281 (SISNRLRSPPPSSRSSGNGPRFGNSP) are compositionally biased toward low complexity. A Phosphoserine modification is found at S280. T283 is subject to Phosphothreonine. Phosphoserine occurs at positions 291, 301, and 314. Residues 315 to 332 (PHKEDVSAHHRSSHDHGY) are compositionally biased toward basic and acidic residues. A Phosphoserine modification is found at S353. T365 is subject to Phosphothreonine. The span at 392–403 (GKYERYSRDRYS) shows a compositional bias: basic and acidic residues. Low complexity predominate over residues 408–422 (RSPSVQHSRSRQSPS). Residues 444–468 (TTVSSTPSHTTRTSKRASGTGTSGD) are compositionally biased toward polar residues. Positions 473–484 (SPRTSSRYMESS) are enriched in low complexity. Phosphoserine occurs at positions 487 and 492. A compositionally biased stretch (basic residues) spans 495–508 (HHYHHRRSPRMRQR). Residues 518 to 533 (PSSASSESSASRSRSP) are compositionally biased toward low complexity. S553 carries the phosphoserine modification. Disordered stretches follow at residues 574 to 661 (ERQE…ADVP) and 675 to 782 (PFSA…QRPV). Over residues 586–603 (GALTINDNSSSVDGNTPN) the composition is skewed to polar residues. The span at 609 to 623 (SAPGSGTPAAASTTS) shows a compositional bias: low complexity. Polar residues-rich tracts occupy residues 644–656 (NKQN…NPAS) and 721–731 (VTSSGSANKSV). 4 positions are modified to phosphoserine: S730, S743, S747, and S755. The segment covering 746-760 (LSGDDDVIDSPEDFD) has biased composition (acidic residues). The 295-residue stretch at 804–1098 (FEMIAQIGEG…AEDALRSPWL (295 aa)) folds into the Protein kinase domain. Residues 810-818 (IGEGTYGQV), K833, and 891-896 (EYMDHD) each bind ATP. The active-site Proton acceptor is the D936. Residue H1118 coordinates ATP.

This sequence belongs to the protein kinase superfamily. CMGC Ser/Thr protein kinase family. CDC2/CDKX subfamily. As to quaternary structure, interacts with cyclin CycK.

It localises to the nucleus. The protein resides in the chromosome. It catalyses the reaction [DNA-directed RNA polymerase] + ATP = phospho-[DNA-directed RNA polymerase] + ADP + H(+). The catalysed reaction is L-seryl-[protein] + ATP = O-phospho-L-seryl-[protein] + ADP + H(+). The enzyme catalyses L-threonyl-[protein] + ATP = O-phospho-L-threonyl-[protein] + ADP + H(+). Functionally, cyclin-dependent kinase which displays CTD kinase activity: hyperphosphorylates the C-terminal heptapeptide repeat domain (CTD) of the largest RNA polymerase II subunit, thereby acting as a key regulator of transcription elongation. The protein is Cyclin-dependent kinase 12 (Cdk12) of Drosophila melanogaster (Fruit fly).